The chain runs to 403 residues: Alkaline protease 1 (403 aa).

Positions 1–21 (MHSFKRSLLLLGALLPAVFGA) are cleaved as a signal peptide. A propeptide spanning residues 22–124 (PVEPRRAAEK…QIWYIDALTS (103 aa)) is cleaved from the precursor. The region spanning 35-119 (KYIVTFKSGL…HVEEDQIWYI (85 aa)) is the Inhibitor I9 domain. Residues 129–403 (PWGLGAISHK…NLLAYNGADE (275 aa)) form the Peptidase S8 domain. Catalysis depends on charge relay system residues aspartate 161 and histidine 192. N-linked (GlcNAc...) asparagine glycosylation occurs at asparagine 252. The Charge relay system role is filled by serine 348.

The protein belongs to the peptidase S8 family.

The protein resides in the secreted. The catalysed reaction is Hydrolysis of proteins with broad specificity, and of Bz-Arg-OEt &gt; Ac-Tyr-OEt. Does not hydrolyze peptide amides.. In terms of biological role, secreted alkaline protease that allows assimilation of proteinaceous substrates. The protein is Alkaline protease 1 (alp1) of Emericella nidulans (strain FGSC A4 / ATCC 38163 / CBS 112.46 / NRRL 194 / M139) (Aspergillus nidulans).